Consider the following 226-residue polypeptide: Thymidylate kinase (226 aa).

20 to 27 is an ATP binding site; sequence GGEGAGKS.

It belongs to the thymidylate kinase family.

The catalysed reaction is dTMP + ATP = dTDP + ADP. In terms of biological role, phosphorylation of dTMP to form dTDP in both de novo and salvage pathways of dTTP synthesis. This chain is Thymidylate kinase, found in Bradyrhizobium sp. (strain BTAi1 / ATCC BAA-1182).